Consider the following 356-residue polypeptide: uncharacterized protein (356 aa).

6 consecutive transmembrane segments (helical) span residues 2–22 (FEAFIYNISVIVAGIYLFHRL), 35–55 (AYVTVLMTIVSLLLSVYPIPY), 74–94 (FTNMVYTLSATVIVAIVEIVV), 99–119 (IMYGVTLIVIAAVTSAIGPFL), 124–144 (VLSLLILNVVTIIILFGVALV), and 154–174 (IILIPISLIITLASAITFVDI). Residues 218–353 (QSIALLLIDI…GRNKVMFNPI (136 aa)) enclose the GGDEF domain.

The protein localises to the cell membrane. This is an uncharacterized protein from Staphylococcus aureus (strain bovine RF122 / ET3-1).